The primary structure comprises 528 residues: Transcription factor cghF (528 aa).

The disordered stretch occupies residues 232-283 (TPPNHATSSTPTSTRTPPTYHPHGPRPKSPLSSTPSPRTESTKSAAPSRDLA). A compositionally biased stretch (low complexity) spans 238–249 (TSSTPTSTRTPP). Residues 261–276 (PLSSTPSPRTESTKSA) show a composition bias toward polar residues.

Its subcellular location is the nucleus. Functionally, transcription factor that regulates the expression of the gene cluster that mediates the biosynthesis of the tetramic acid Sch210972, a potential anti-HIV fungal natural product that contains a decalin core. This is Transcription factor cghF from Chaetomium globosum (strain ATCC 6205 / CBS 148.51 / DSM 1962 / NBRC 6347 / NRRL 1970) (Soil fungus).